The following is a 129-amino-acid chain: Fluoride-specific ion channel FluC 1 (129 aa).

4 helical membrane-spanning segments follow: residues 9–29, 33–53, 62–82, and 98–118; these read LSVG…NLIW, GTLT…YFFV, LVTG…SFNL, and IYFF…MLVG. Residues Gly72 and Thr75 each coordinate Na(+).

Belongs to the fluoride channel Fluc/FEX (TC 1.A.43) family.

It localises to the cell membrane. The catalysed reaction is fluoride(in) = fluoride(out). With respect to regulation, na(+) is not transported, but it plays an essential structural role and its presence is essential for fluoride channel function. Its function is as follows. Fluoride-specific ion channel. Important for reducing fluoride concentration in the cell, thus reducing its toxicity. This is Fluoride-specific ion channel FluC 1 from Lactobacillus johnsonii (strain CNCM I-12250 / La1 / NCC 533).